The primary structure comprises 320 residues: Pyrroline-5-carboxylate reductase 2 (320 aa).

Residue Ser-2 is modified to N-acetylserine. NADP(+) is bound by residues 6–11 (IGAGQL) and Ser-34. The NADPH site is built by Ala-8, Gln-10, Leu-11, Ser-34, Glu-36, Asn-56, Val-70, Lys-71, and Ala-97. Residues Asn-56, 69–72 (AVKP), and 95–97 (CAA) each bind NADP(+). Glu-164 is an L-proline binding site. NADPH is bound at residue Asn-230. The L-proline site is built by Ala-237 and Thr-238. Low complexity predominate over residues 295 to 305 (PTVSTLTPSSP). A disordered region spans residues 295–320 (PTVSTLTPSSPGKLLTRSLALGGKKD). Position 304 is a phosphoserine (Ser-304).

The protein belongs to the pyrroline-5-carboxylate reductase family. Homodecamer; composed of 5 homodimers. Interacts with LTO1. Detected in erythrocytes (at protein level). Expressed in fetal brain.

The protein resides in the cytoplasm. The protein localises to the mitochondrion. It catalyses the reaction L-proline + NADP(+) = (S)-1-pyrroline-5-carboxylate + NADPH + 2 H(+). The enzyme catalyses L-proline + NAD(+) = (S)-1-pyrroline-5-carboxylate + NADH + 2 H(+). Its pathway is amino-acid biosynthesis; L-proline biosynthesis; L-proline from L-glutamate 5-semialdehyde: step 1/1. Subject to competitive inhibition by NADP. Was reported not to be inhibited by proline. However other study demonstrated an inhibition by proline. In terms of biological role, oxidoreductase that catalyzes the last step in proline biosynthesis, which corresponds to the reduction of pyrroline-5-carboxylate to L-proline using NAD(P)H. At physiologic concentrations, has higher specific activity in the presence of NADH. Involved in cellular response to oxidative stress. In some cell types, such as erythrocytes, its primary function may be the generation of NADP(+). The chain is Pyrroline-5-carboxylate reductase 2 from Homo sapiens (Human).